Reading from the N-terminus, the 728-residue chain is Catalase-peroxidase 1 (728 aa).

A signal peptide spans 1–22 (MDKTQSSQGKCPVMHGANSAVA). The segment at residues 97–225 (WHSAGTYRVA…LAAVMMGLIY (129 aa)) is a cross-link (tryptophyl-tyrosyl-methioninium (Trp-Tyr) (with M-251)). His-98 (proton acceptor) is an active-site residue. Positions 225 to 251 (YVNPEGVDGKPDPLRTAQDVRVTFARM) form a cross-link, tryptophyl-tyrosyl-methioninium (Tyr-Met) (with W-97). Position 266 (His-266) interacts with heme b.

This sequence belongs to the peroxidase family. Peroxidase/catalase subfamily. In terms of assembly, homodimer or homotetramer. It depends on heme b as a cofactor. Formation of the three residue Trp-Tyr-Met cross-link is important for the catalase, but not the peroxidase activity of the enzyme.

The enzyme catalyses H2O2 + AH2 = A + 2 H2O. The catalysed reaction is 2 H2O2 = O2 + 2 H2O. Its function is as follows. Bifunctional enzyme with both catalase and broad-spectrum peroxidase activity. In Shewanella sp. (strain MR-4), this protein is Catalase-peroxidase 1.